The chain runs to 277 residues: Large ribosomal subunit protein uL2 (277 aa).

The segment at 223-261 is disordered; it reads SVMNPNDHPHGGGEGKSPVGRPSPVTPWGKPALGYKTRK.

This sequence belongs to the universal ribosomal protein uL2 family. In terms of assembly, part of the 50S ribosomal subunit. Forms a bridge to the 30S subunit in the 70S ribosome.

Functionally, one of the primary rRNA binding proteins. Required for association of the 30S and 50S subunits to form the 70S ribosome, for tRNA binding and peptide bond formation. It has been suggested to have peptidyltransferase activity; this is somewhat controversial. Makes several contacts with the 16S rRNA in the 70S ribosome. The chain is Large ribosomal subunit protein uL2 from Clostridium botulinum (strain Alaska E43 / Type E3).